The primary structure comprises 1381 residues: Regulator of G-protein signaling 12 (1381 aa).

A PDZ domain is found at 21–98 (SVEVARGRAG…VLHMVIAEGT (78 aa)). A phosphoserine mark is found at serine 171 and serine 194. Residue lysine 195 forms a Glycyl lysine isopeptide (Lys-Gly) (interchain with G-Cter in SUMO2) linkage. The PID domain occupies 223–390 (SILNVAMVVG…VLQFISVLYR (168 aa)). Disordered regions lie at residues 409–428 (ADAH…IGNF), 442–528 (LGGG…GAAG), and 620–644 (RKTK…SQRT). The span at 412 to 428 (HQNNSTSSNSDSGIGNF) shows a compositional bias: polar residues. 2 positions are modified to omega-N-methylarginine: arginine 524 and arginine 633. Phosphoserine is present on residues serine 661 and serine 671. In terms of domain architecture, RGS spans 715-832 (SFERLLQDPV…LKSQLYQECV (118 aa)). The interval 842–942 (PDSQQVPSSP…ESQGSVSSAG (101 aa)) is disordered. Positions 849 to 869 (SSPASKHSISSDHSNVSTPKK) are enriched in low complexity. A phosphoserine mark is found at serine 850 and serine 879. Residues 914–923 (DHGDHAHDAP) are compositionally biased toward basic and acidic residues. At serine 943 the chain carries Phosphoserine. RBD domains follow at residues 962 to 1032 (KHCC…LEKR) and 1034 to 1104 (LFRL…LEER). Basic and acidic residues predominate over residues 1102 to 1117 (EERDPSRGKVSTDKQK). A disordered region spans residues 1102–1169 (EERDPSRGKV…RDPRLSKREE (68 aa)). A compositionally biased stretch (polar residues) spans 1122-1132 (KQNSAVNSSPR). Residues 1151 to 1169 (IRGENGKSARDPRLSKREE) show a composition bias toward basic and acidic residues. The region spanning 1187-1209 (AEEFFELISKAQSNRADDQRGLL) is the GoLoco domain. Disordered regions lie at residues 1227–1318 (SELA…QEGT) and 1347–1381 (LMGE…TSRF). A compositionally biased stretch (low complexity) spans 1261-1280 (SDSPATSPASAQSPCSAYSP). A compositionally biased stretch (pro residues) spans 1361 to 1381 (LPPPPTPQDTPGPPRPGTSRF).

As to quaternary structure, interacts with GNAI1, GNAI2 and GNAI3; the interactions are GDP-dependent. As to expression, expressed in brain.

It is found in the nucleus. The protein resides in the cytoplasm. It localises to the cell projection. The protein localises to the dendrite. Its subcellular location is the synapse. Functionally, regulates G protein-coupled receptor signaling cascades. Inhibits signal transduction by increasing the GTPase activity of G protein alpha subunits, thereby driving them into their inactive GDP-bound form. The protein is Regulator of G-protein signaling 12 (Rgs12) of Mus musculus (Mouse).